Here is a 196-residue protein sequence, read N- to C-terminus: ATP-dependent Clp protease proteolytic subunit (196 aa).

The Nucleophile role is filled by Ser99. His124 is an active-site residue.

This sequence belongs to the peptidase S14 family. Fourteen ClpP subunits assemble into 2 heptameric rings which stack back to back to give a disk-like structure with a central cavity, resembling the structure of eukaryotic proteasomes.

The protein resides in the cytoplasm. The enzyme catalyses Hydrolysis of proteins to small peptides in the presence of ATP and magnesium. alpha-casein is the usual test substrate. In the absence of ATP, only oligopeptides shorter than five residues are hydrolyzed (such as succinyl-Leu-Tyr-|-NHMec, and Leu-Tyr-Leu-|-Tyr-Trp, in which cleavage of the -Tyr-|-Leu- and -Tyr-|-Trp bonds also occurs).. Functionally, cleaves peptides in various proteins in a process that requires ATP hydrolysis. Has a chymotrypsin-like activity. Plays a major role in the degradation of misfolded proteins. The protein is ATP-dependent Clp protease proteolytic subunit of Nitratiruptor sp. (strain SB155-2).